The chain runs to 463 residues: Argininosuccinate lyase (463 aa).

The protein belongs to the lyase 1 family. Argininosuccinate lyase subfamily.

It localises to the cytoplasm. It carries out the reaction 2-(N(omega)-L-arginino)succinate = fumarate + L-arginine. The protein operates within amino-acid biosynthesis; L-arginine biosynthesis; L-arginine from L-ornithine and carbamoyl phosphate: step 3/3. This Ruegeria pomeroyi (strain ATCC 700808 / DSM 15171 / DSS-3) (Silicibacter pomeroyi) protein is Argininosuccinate lyase.